The primary structure comprises 365 residues: Protein YIM1 (365 aa).

This sequence belongs to the YIM1 family.

It is found in the lipid droplet. It localises to the mitochondrion. In Saccharomyces cerevisiae (strain ATCC 204508 / S288c) (Baker's yeast), this protein is Protein YIM1 (YIM1).